A 259-amino-acid polypeptide reads, in one-letter code: UPF0246 protein PBPRA0561 (259 aa).

Belongs to the UPF0246 family.

This Photobacterium profundum (strain SS9) protein is UPF0246 protein PBPRA0561.